Reading from the N-terminus, the 802-residue chain is Vacuolar membrane protease (802 aa).

Residues 1–13 (MARYNPLAFTSGP) are Cytoplasmic-facing. The helical transmembrane segment at 14-34 (VVFFITITYTALLIALLLTHL) threads the bilayer. Over 35–357 (TLPSYPSHPP…KVFIVFQLHT (323 aa)) the chain is Vacuolar. 4 N-linked (GlcNAc...) asparagine glycosylation sites follow: N48, N102, N105, and N112. 2 residues coordinate Zn(2+): H152 and D164. E198 serves as the catalytic Proton acceptor. Positions 199, 224, and 297 each coordinate Zn(2+). The chain crosses the membrane as a helical span at residues 358-378 (FFALCVTLLVVAPLTLIGLAW). Residues 379–389 (SLHKADRNYLF) are Cytoplasmic-facing. Residues 390 to 409 (ARKAFVYSADDDEPIHLYGW) traverse the membrane as a helical segment. The Vacuolar segment spans residues 410-423 (RGFFRFPIAFGIAT). The helical transmembrane segment at 424-444 (SIVVGLAMMLSAWFAVSWFLL) threads the bilayer. Residues 445–457 (HGADAMRPSALQR) are Cytoplasmic-facing. A helical transmembrane segment spans residues 458–478 (MYSLLWLFIGSFCLLVFFTIL). Over 479-490 (ANNHQVAAGYPS) the chain is Vacuolar. Residues 491 to 511 (LFCFATVFLANVLSFLELFLA) form a helical membrane-spanning segment. Topologically, residues 512 to 609 (PPKSAYAWNV…EQEWSGKLPS (98 aa)) are cytoplasmic. Disordered regions lie at residues 528–554 (GSRPLTSSATAARSDNRATTDDDATET) and 570–603 (AGRRDAINEGANSQEPESRRRLDLGQPHSGEQEW). A helical transmembrane segment spans residues 610 to 630 (WIWIVQFSLLAPMIVILVGQI). Topologically, residues 631 to 649 (ALLLTSALYQTPSDGNSPL) are vacuolar. Residues 650 to 670 (YIYTSIAALAVFLVAPIGPFI) form a helical membrane-spanning segment. The Cytoplasmic portion of the chain corresponds to 671 to 677 (HRFTHHV). Residues 678–698 (PTFLFLLCVATTIYNLVAFPF) traverse the membrane as a helical segment. Residues 699–802 (SEQHKLKVYF…HDDSNNRGRR (104 aa)) lie on the Vacuolar side of the membrane. N746 and N779 each carry an N-linked (GlcNAc...) asparagine glycan.

This sequence belongs to the peptidase M28 family. Requires Zn(2+) as cofactor.

It localises to the vacuole membrane. Functionally, may be involved in vacuolar sorting and osmoregulation. This chain is Vacuolar membrane protease, found in Leptosphaeria maculans (strain JN3 / isolate v23.1.3 / race Av1-4-5-6-7-8) (Blackleg fungus).